The sequence spans 190 residues: Peptidyl-prolyl cis-trans isomerase FKBP20-1 (190 aa).

Gly-2 carries the post-translational modification N-acetylglycine. Residues 32–121 enclose the PPIase FKBP-type domain; sequence LPVVDVHYEG…IFEVELVACR (90 aa). Over residues 149-163 the composition is skewed to basic and acidic residues; sequence AAAKEDDKKKREEAK. Residues 149 to 190 form a disordered region; sequence AAAKEDDKKKREEAKAAAAARIQAKLDAKKGPGKGKGKGKAK. Over residues 179–190 the composition is skewed to basic residues; that stretch reads GPGKGKGKGKAK.

Belongs to the FKBP-type PPIase family.

It carries out the reaction [protein]-peptidylproline (omega=180) = [protein]-peptidylproline (omega=0). Its function is as follows. PPIases accelerate the folding of proteins. It catalyzes the cis-trans isomerization of proline imidic peptide bonds in oligopeptides. This chain is Peptidyl-prolyl cis-trans isomerase FKBP20-1 (FKBP20-1), found in Arabidopsis thaliana (Mouse-ear cress).